The primary structure comprises 172 residues: Bifunctional protein PyrR (172 aa).

Residues 90 to 102 (LVLVDDVLMSGRT) carry the PRPP-binding motif.

Belongs to the purine/pyrimidine phosphoribosyltransferase family. PyrR subfamily.

It carries out the reaction UMP + diphosphate = 5-phospho-alpha-D-ribose 1-diphosphate + uracil. In terms of biological role, regulates the transcription of the pyrimidine nucleotide (pyr) operon in response to exogenous pyrimidines. Functionally, also displays a weak uracil phosphoribosyltransferase activity which is not physiologically significant. This Pseudomonas putida (strain GB-1) protein is Bifunctional protein PyrR.